The following is a 256-amino-acid chain: 1-(5-phosphoribosyl)-5-[(5-phosphoribosylamino)methylideneamino] imidazole-4-carboxamide isomerase (256 aa).

The active-site Proton acceptor is the Asp8. The active-site Proton donor is the Asp129.

Belongs to the HisA/HisF family.

It is found in the cytoplasm. It catalyses the reaction 1-(5-phospho-beta-D-ribosyl)-5-[(5-phospho-beta-D-ribosylamino)methylideneamino]imidazole-4-carboxamide = 5-[(5-phospho-1-deoxy-D-ribulos-1-ylimino)methylamino]-1-(5-phospho-beta-D-ribosyl)imidazole-4-carboxamide. Its pathway is amino-acid biosynthesis; L-histidine biosynthesis; L-histidine from 5-phospho-alpha-D-ribose 1-diphosphate: step 4/9. In Synechococcus sp. (strain CC9311), this protein is 1-(5-phosphoribosyl)-5-[(5-phosphoribosylamino)methylideneamino] imidazole-4-carboxamide isomerase.